A 311-amino-acid polypeptide reads, in one-letter code: tRNA-cytidine(32) 2-sulfurtransferase (311 aa).

A PP-loop motif motif is present at residues 47–52 (SGGKDS). Residues C122, C125, and C213 each coordinate [4Fe-4S] cluster.

The protein belongs to the TtcA family. Homodimer. It depends on Mg(2+) as a cofactor. Requires [4Fe-4S] cluster as cofactor.

The protein localises to the cytoplasm. The enzyme catalyses cytidine(32) in tRNA + S-sulfanyl-L-cysteinyl-[cysteine desulfurase] + AH2 + ATP = 2-thiocytidine(32) in tRNA + L-cysteinyl-[cysteine desulfurase] + A + AMP + diphosphate + H(+). Its pathway is tRNA modification. Catalyzes the ATP-dependent 2-thiolation of cytidine in position 32 of tRNA, to form 2-thiocytidine (s(2)C32). The sulfur atoms are provided by the cysteine/cysteine desulfurase (IscS) system. The protein is tRNA-cytidine(32) 2-sulfurtransferase of Pectobacterium carotovorum subsp. carotovorum (strain PC1).